The chain runs to 139 residues: Large ribosomal subunit protein bL17 (139 aa).

Belongs to the bacterial ribosomal protein bL17 family. As to quaternary structure, part of the 50S ribosomal subunit. Contacts protein L32.

In Azorhizobium caulinodans (strain ATCC 43989 / DSM 5975 / JCM 20966 / LMG 6465 / NBRC 14845 / NCIMB 13405 / ORS 571), this protein is Large ribosomal subunit protein bL17.